The chain runs to 123 residues: uncharacterized protein (123 aa).

Positions 17-117 (LNNNAFLVDV…NNQDKGWKQN (101 aa)) constitute a Rhodanese domain.

This is an uncharacterized protein from Rickettsia prowazekii (strain Madrid E).